Consider the following 254-residue polypeptide: 3-oxo-5-alpha-steroid 4-dehydrogenase 2 (254 aa).

4 consecutive transmembrane segments (helical) span residues 8 to 28, 72 to 92, 146 to 166, and 206 to 226; these read VPVLAGSATLATMGTLILCLG, PRSLFGPPGNVLLALFSAHYF, FSFGVFLFILGMGINIHSDYT, and LATWSVPAFAFAFFTLCFLGM.

Belongs to the steroid 5-alpha reductase family. In terms of tissue distribution, expressed in high levels in the prostate and many other androgen-sensitive tissues.

It localises to the microsome membrane. It is found in the endoplasmic reticulum membrane. The catalysed reaction is a 3-oxo-5alpha-steroid + NADP(+) = a 3-oxo-Delta(4)-steroid + NADPH + H(+). It carries out the reaction 17beta-hydroxy-5alpha-androstan-3-one + NADP(+) = testosterone + NADPH + H(+). The enzyme catalyses 5alpha-pregnane-3,20-dione + NADP(+) = progesterone + NADPH + H(+). In terms of biological role, converts testosterone (T) into 5-alpha-dihydrotestosterone (DHT) and progesterone or corticosterone into their corresponding 5-alpha-3-oxosteroids. It plays a central role in sexual differentiation and androgen physiology. The chain is 3-oxo-5-alpha-steroid 4-dehydrogenase 2 (Srd5a2) from Rattus norvegicus (Rat).